The primary structure comprises 444 residues: Probable D-serine dehydratase (444 aa).

Position 118 is an N6-(pyridoxal phosphate)lysine (K118).

The protein belongs to the serine/threonine dehydratase family. DsdA subfamily. Pyridoxal 5'-phosphate serves as cofactor.

The catalysed reaction is D-serine = pyruvate + NH4(+). This is Probable D-serine dehydratase from Acinetobacter baumannii (strain ACICU).